Reading from the N-terminus, the 1304-residue chain is NAD-dependent protein deacetylase Sir2B (1304 aa).

The Deacetylase sirtuin-type domain occupies 28–466 (TEEEKKKVKE…LISIHNIKMK (439 aa)). NAD(+)-binding positions include 53 to 72 (GAGISTSSGLQDFRGPTGIW) and 274 to 277 (QNID). His294 (proton acceptor) is an active-site residue. Residues Cys302, Cys305, Cys327, and Cys330 each contribute to the Zn(2+) site. Residues 371 to 373 (GSS), 399 to 401 (NYQ), and Val417 each bind NAD(+). 3 disordered regions span residues 545–585 (EHNN…SSSI), 749–827 (KVKS…DKDN), and 1154–1203 (EIKY…DDNN). Low complexity-rich tracts occupy residues 548 to 585 (NNNNNNNNNNNNNNNNNNNNNNNNNNNNNNNNNSSSSI), 756 to 806 (NNNN…ISDH), and 1182 to 1203 (DDNNNNDDNNNNDDNNNNDDNN).

It belongs to the sirtuin family. Class IV subfamily. Requires Zn(2+) as cofactor.

It carries out the reaction N(6)-acetyl-L-lysyl-[protein] + NAD(+) + H2O = 2''-O-acetyl-ADP-D-ribose + nicotinamide + L-lysyl-[protein]. In terms of biological role, regulates the expression of the surface antigen-coding var genes central to the malaria pathogenesis. Cooperates with Sir2A to mediate silencing and mutual exclusive expression of only 1 of the 60 subtelomeric var genes at a time, coding for functionally different but epitopically variant versions of the erythrocyte membrane protein 1 (PfEMP1) molecule, to evade the detection by host immune surveillance. The protein is NAD-dependent protein deacetylase Sir2B of Plasmodium falciparum (isolate 3D7).